The chain runs to 246 residues: High mobility group protein 1 (246 aa).

Positions 106-179 form a DNA-binding region, HMG box; the sequence is PKKPLTVFFA…NYQREKSKYL (74 aa). Residues 179–246 form a disordered region; it reads LEAKKNGTLP…KKKDKSNSSI (68 aa). Over residues 214 to 227 the composition is skewed to basic and acidic residues; the sequence is PVEKRPHDDDGSSE. Over residues 228 to 238 the composition is skewed to basic residues; it reads KKKKKKKKDKK.

In terms of assembly, interacts with FPR1. Interacts with an unidentified DNA helicase. Associates with rDNA.

The protein resides in the nucleus. It is found in the nucleolus. In terms of biological role, DNA-binding protein that is probably part of the rDNA transcription apparatus. Acts synergetically with the RPA49 subunit of RNA polymerase I during rDNA transcription. May participate in mutagenesis control. This Saccharomyces cerevisiae (strain ATCC 204508 / S288c) (Baker's yeast) protein is High mobility group protein 1 (HMO1).